The following is a 33-amino-acid chain: Tail virion protein G7P (33 aa).

Residues Ile-10–Gly-30 traverse the membrane as a helical segment.

The protein belongs to the inovirus G7P protein family.

It is found in the virion. Its subcellular location is the host membrane. Its function is as follows. May initiate with G9P the virion concomitant assembly-budding process, by interacting with the packaging signal of the viral genome. The assembly-budding takes place at the host inner membrane. In turn, G7P and G9P are present at the end of the filamentous virion that emerges first from the bacterial host. The sequence is that of Tail virion protein G7P (VII) from Escherichia coli (Bacteriophage f1).